The chain runs to 883 residues: N,N'-diacetylchitobiase (883 aa).

A signal peptide spans 1 to 17 (MLKHSLIAASVITTLAG). A lipid anchor (N-palmitoyl cysteine) is attached at Cys-18. Cys-18 carries the S-diacylglycerol cysteine lipid modification. 3 cysteine pairs are disulfide-bonded: Cys-54/Cys-64, Cys-394/Cys-402, and Cys-502/Cys-577. The active-site Proton donor is Glu-537.

The protein belongs to the glycosyl hydrolase 20 family. In terms of processing, this protein is probably a lipoprotein, its processing is inhibited by globomycin.

The protein localises to the cell outer membrane. The catalysed reaction is Hydrolysis of terminal non-reducing N-acetyl-D-hexosamine residues in N-acetyl-beta-D-hexosaminides.. It participates in glycan degradation; chitin degradation. Its function is as follows. Hydrolysis of terminal, non-reducing N-acetyl-beta-D-glucosamine residues in chitobiose and higher analogs, and in glycoproteins. This is N,N'-diacetylchitobiase (chb) from Vibrio harveyi (Beneckea harveyi).